Reading from the N-terminus, the 317-residue chain is tRNA dimethylallyltransferase (317 aa).

14–21 (GPTAVGKT) is an ATP binding site. Residue 16 to 21 (TAVGKT) participates in substrate binding. An interaction with substrate tRNA region spans residues 39-42 (DSMQ).

Belongs to the IPP transferase family. As to quaternary structure, monomer. Requires Mg(2+) as cofactor.

It catalyses the reaction adenosine(37) in tRNA + dimethylallyl diphosphate = N(6)-dimethylallyladenosine(37) in tRNA + diphosphate. Its function is as follows. Catalyzes the transfer of a dimethylallyl group onto the adenine at position 37 in tRNAs that read codons beginning with uridine, leading to the formation of N6-(dimethylallyl)adenosine (i(6)A). The polypeptide is tRNA dimethylallyltransferase (Bacillus cereus (strain B4264)).